The primary structure comprises 331 residues: Ketol-acid reductoisomerase (NADP(+)) (331 aa).

The region spanning 2 to 182 is the KARI N-terminal Rossmann domain; the sequence is ARMYYDADAN…GGTRGGILET (181 aa). Residues 25 to 28, S51, S53, and 83 to 86 contribute to the NADP(+) site; these read YGSQ and DDVQ. H108 is an active-site residue. G134 contacts NADP(+). The region spanning 183-328 is the KARI C-terminal knotted domain; sequence TFREETETDL…KDLRAMFSWL (146 aa). Mg(2+)-binding residues include D191, E195, E227, and E231. S252 serves as a coordination point for substrate.

The protein belongs to the ketol-acid reductoisomerase family. Mg(2+) serves as cofactor.

The catalysed reaction is (2R)-2,3-dihydroxy-3-methylbutanoate + NADP(+) = (2S)-2-acetolactate + NADPH + H(+). The enzyme catalyses (2R,3R)-2,3-dihydroxy-3-methylpentanoate + NADP(+) = (S)-2-ethyl-2-hydroxy-3-oxobutanoate + NADPH + H(+). It functions in the pathway amino-acid biosynthesis; L-isoleucine biosynthesis; L-isoleucine from 2-oxobutanoate: step 2/4. Its pathway is amino-acid biosynthesis; L-valine biosynthesis; L-valine from pyruvate: step 2/4. In terms of biological role, involved in the biosynthesis of branched-chain amino acids (BCAA). Catalyzes an alkyl-migration followed by a ketol-acid reduction of (S)-2-acetolactate (S2AL) to yield (R)-2,3-dihydroxy-isovalerate. In the isomerase reaction, S2AL is rearranged via a Mg-dependent methyl migration to produce 3-hydroxy-3-methyl-2-ketobutyrate (HMKB). In the reductase reaction, this 2-ketoacid undergoes a metal-dependent reduction by NADPH to yield (R)-2,3-dihydroxy-isovalerate. This Picosynechococcus sp. (strain ATCC 27264 / PCC 7002 / PR-6) (Agmenellum quadruplicatum) protein is Ketol-acid reductoisomerase (NADP(+)).